The primary structure comprises 315 residues: HTH-type transcriptional regulator TreR (315 aa).

The 55-residue stretch at 5 to 59 folds into the HTH lacI-type domain; that stretch reads LTIKDIARLSGVGKSTVSRVLNNESGVSQLTRERVEAVMNQHGFSPSRSARAMRG. Positions 7–26 form a DNA-binding region, H-T-H motif; the sequence is IKDIARLSGVGKSTVSRVLN. Residues 71 to 77, glycine 126, arginine 147, 187 to 190, arginine 194, threonine 242, and tyrosine 284 each bind alpha,alpha-trehalose 6-phosphate; these read RLDSLSE and DVTT.

Homodimer.

Its function is as follows. Repressor of the treBC operon. It is able to bind trehalose-6-phosphate and trehalose. The protein is HTH-type transcriptional regulator TreR (treR) of Escherichia coli (strain K12).